The following is a 174-amino-acid chain: ATP-dependent protease subunit HslV (174 aa).

Thr-2 is a catalytic residue. Gly-157, Cys-160, and Thr-163 together coordinate Na(+).

Belongs to the peptidase T1B family. HslV subfamily. In terms of assembly, a double ring-shaped homohexamer of HslV is capped on each side by a ring-shaped HslU homohexamer. The assembly of the HslU/HslV complex is dependent on binding of ATP.

It localises to the cytoplasm. The enzyme catalyses ATP-dependent cleavage of peptide bonds with broad specificity.. With respect to regulation, allosterically activated by HslU binding. Protease subunit of a proteasome-like degradation complex believed to be a general protein degrading machinery. The chain is ATP-dependent protease subunit HslV from Shewanella sediminis (strain HAW-EB3).